A 360-amino-acid polypeptide reads, in one-letter code: Phospho-N-acetylmuramoyl-pentapeptide-transferase (360 aa).

A run of 10 helical transmembrane segments spans residues 27-47, 73-93, 98-118, 134-154, 168-188, 199-219, 239-259, 263-283, 288-308, and 337-357; these read GAVM…IEWL, TMGG…WADL, VWAV…DDYL, LVAQ…LGQG, LTFN…VGAS, GLAI…AYLV, LAVF…FNAP, VFMG…VSVV, IVLA…IVQV, and TVVI…LSTL.

This sequence belongs to the glycosyltransferase 4 family. MraY subfamily. The cofactor is Mg(2+).

Its subcellular location is the cell inner membrane. The catalysed reaction is UDP-N-acetyl-alpha-D-muramoyl-L-alanyl-gamma-D-glutamyl-meso-2,6-diaminopimeloyl-D-alanyl-D-alanine + di-trans,octa-cis-undecaprenyl phosphate = di-trans,octa-cis-undecaprenyl diphospho-N-acetyl-alpha-D-muramoyl-L-alanyl-D-glutamyl-meso-2,6-diaminopimeloyl-D-alanyl-D-alanine + UMP. It participates in cell wall biogenesis; peptidoglycan biosynthesis. Catalyzes the initial step of the lipid cycle reactions in the biosynthesis of the cell wall peptidoglycan: transfers peptidoglycan precursor phospho-MurNAc-pentapeptide from UDP-MurNAc-pentapeptide onto the lipid carrier undecaprenyl phosphate, yielding undecaprenyl-pyrophosphoryl-MurNAc-pentapeptide, known as lipid I. The protein is Phospho-N-acetylmuramoyl-pentapeptide-transferase of Rhodospirillum rubrum (strain ATCC 11170 / ATH 1.1.1 / DSM 467 / LMG 4362 / NCIMB 8255 / S1).